A 290-amino-acid polypeptide reads, in one-letter code: Acetyl-coenzyme A carboxylase carboxyl transferase subunit beta (290 aa).

The CoA carboxyltransferase N-terminal domain maps to Val-28–Asn-290. Positions 32, 35, 51, and 54 each coordinate Zn(2+). The C4-type zinc-finger motif lies at Cys-32–Cys-54.

This sequence belongs to the AccD/PCCB family. Acetyl-CoA carboxylase is a heterohexamer composed of biotin carboxyl carrier protein (AccB), biotin carboxylase (AccC) and two subunits each of ACCase subunit alpha (AccA) and ACCase subunit beta (AccD). Requires Zn(2+) as cofactor.

The protein resides in the cytoplasm. The catalysed reaction is N(6)-carboxybiotinyl-L-lysyl-[protein] + acetyl-CoA = N(6)-biotinyl-L-lysyl-[protein] + malonyl-CoA. It participates in lipid metabolism; malonyl-CoA biosynthesis; malonyl-CoA from acetyl-CoA: step 1/1. Functionally, component of the acetyl coenzyme A carboxylase (ACC) complex. Biotin carboxylase (BC) catalyzes the carboxylation of biotin on its carrier protein (BCCP) and then the CO(2) group is transferred by the transcarboxylase to acetyl-CoA to form malonyl-CoA. In Geobacillus thermodenitrificans (strain NG80-2), this protein is Acetyl-coenzyme A carboxylase carboxyl transferase subunit beta.